The sequence spans 251 residues: D-aminoacyl-tRNA deacylase (251 aa).

Belongs to the DtdA deacylase family. Monomer. It depends on Zn(2+) as a cofactor.

It catalyses the reaction a D-aminoacyl-tRNA + H2O = a tRNA + a D-alpha-amino acid + H(+). The catalysed reaction is glycyl-tRNA(Ala) + H2O = tRNA(Ala) + glycine + H(+). In terms of biological role, D-aminoacyl-tRNA deacylase with broad substrate specificity. By recycling D-aminoacyl-tRNA to D-amino acids and free tRNA molecules, this enzyme counteracts the toxicity associated with the formation of D-aminoacyl-tRNA entities in vivo. The polypeptide is D-aminoacyl-tRNA deacylase (Pyrobaculum aerophilum (strain ATCC 51768 / DSM 7523 / JCM 9630 / CIP 104966 / NBRC 100827 / IM2)).